Here is a 418-residue protein sequence, read N- to C-terminus: L-rhamnose isomerase (418 aa).

Residues His-262, Asp-294, and Asp-296 each coordinate Mn(2+).

It belongs to the rhamnose isomerase family. In terms of assembly, homotetramer. It depends on Mn(2+) as a cofactor.

It localises to the cytoplasm. It carries out the reaction L-rhamnopyranose = L-rhamnulose. It participates in carbohydrate degradation; L-rhamnose degradation; glycerone phosphate from L-rhamnose: step 1/3. Its function is as follows. Catalyzes the interconversion of L-rhamnose and L-rhamnulose. This chain is L-rhamnose isomerase, found in Yersinia pseudotuberculosis serotype IB (strain PB1/+).